Here is a 122-residue protein sequence, read N- to C-terminus: Ribosome-binding factor A (122 aa).

This sequence belongs to the RbfA family. In terms of assembly, monomer. Binds 30S ribosomal subunits, but not 50S ribosomal subunits or 70S ribosomes.

It is found in the cytoplasm. One of several proteins that assist in the late maturation steps of the functional core of the 30S ribosomal subunit. Associates with free 30S ribosomal subunits (but not with 30S subunits that are part of 70S ribosomes or polysomes). Required for efficient processing of 16S rRNA. May interact with the 5'-terminal helix region of 16S rRNA. The sequence is that of Ribosome-binding factor A from Polaromonas sp. (strain JS666 / ATCC BAA-500).